A 406-amino-acid polypeptide reads, in one-letter code: Protein translocase subunit SecD (406 aa).

The next 6 helical transmembrane spans lie at 8–28 (IVIL…NPIN), 240–260 (MAAM…YRVA), 262–282 (FVAD…MCAI), 289–309 (PGIA…VIIF), 334–354 (FPAI…LFFF), and 361–381 (GFAV…IFIT).

It belongs to the SecD/SecF family. SecD subfamily. As to quaternary structure, forms a complex with SecF. Part of the essential Sec protein translocation apparatus which comprises SecA, SecYEG and auxiliary proteins SecDF. Other proteins may also be involved.

It localises to the cell inner membrane. Its function is as follows. Part of the Sec protein translocase complex. Interacts with the SecYEG preprotein conducting channel. SecDF uses the proton motive force (PMF) to complete protein translocation after the ATP-dependent function of SecA. This Sebaldella termitidis (strain ATCC 33386 / NCTC 11300) protein is Protein translocase subunit SecD.